The sequence spans 447 residues: uncharacterized protein (447 aa).

The tract at residues 392-435 is disordered; the sequence is RFTKPSSSVAKSTSPSLRNSGSDESDLNQSDSDKEDERVVPVPK. Low complexity predominate over residues 395-407; the sequence is KPSSSVAKSTSPS. Polar residues predominate over residues 408 to 421; sequence LRNSGSDESDLNQS.

This is an uncharacterized protein from Invertebrate iridescent virus 3 (IIV-3).